The sequence spans 283 residues: ESX-1 secretion-associated protein EspG1 (283 aa).

The protein belongs to the EspG family. As to quaternary structure, interacts specifically with ESX-1-dependent PE/PPE proteins. Interacts with PPE68.

Its subcellular location is the cytoplasm. Specific chaperone for cognate PE/PPE proteins. Plays an important role in preventing aggregation of PE/PPE dimers. The sequence is that of ESX-1 secretion-associated protein EspG1 from Mycobacterium tuberculosis (strain ATCC 25618 / H37Rv).